We begin with the raw amino-acid sequence, 500 residues long: FAD-linked oxidoreductase chyH (500 aa).

The first 20 residues, 1 to 20 (MRLQAVTAVAAWAVASACQS), serve as a signal peptide directing secretion. One can recognise an FAD-binding PCMH-type domain in the interval 65 to 235 (LEVPTVNIVI…TSVTSKTYDI (171 aa)). N-linked (GlcNAc...) asparagine glycosylation is found at Asn199, Asn266, Asn275, and Asn383.

This sequence belongs to the oxygen-dependent FAD-linked oxidoreductase family. Requires FAD as cofactor.

It functions in the pathway pigment biosynthesis. FAD-linked oxidoreductase; part of the gene cluster that mediates the biosynthesis of the yellow pigment chrysogine. the NRPS chyA mediates the condensation of anthranilic acid and alanine into the intermediate 2-(2-aminopropanamido)benzoic acid. The remainder of the pathway is highly branched yielding at least 13 chrysogine-related compounds. The malonyl transferase chyE converts 2-(2-aminopropanamido)benzoic acid and 2-(2-aminopropanamido)benzamidine into 2-(2-(2-carboxyacetamido)propanamido)benzoic acid and 3-((1-((2-carbamoylphenyl)amino)-1-oxopropan-2-yl)amino)-3-oxopropanoic acid, respectively. ChyD is an amidase, being responsible for the amidation of the carboxylic acid moiety of 2-(2-aminopropanamido)benzoic acid, 2-(2-(2-carboxyacetamido)propanamido)benzoic acid and 2-(2-((4-amino-1-carboxy-4-oxobutyl)amino)propanamido)benzoic acid. ChyC is involved in the same reactions as ChyD, but plays a more minor role in the amidation reactions compared to chyD. The oxidoreductases chyH and chyM are involved in oxidation reactions that form N-pyruvoylanthranilamide from 2-(2-aminopropanamido)benzamidine and (1-((2-carbamoylphenyl)amino)-1-oxopropan-2-yl)glutamine, respectively. N-pyruvoylanthranilamide is further converted via two further branches in the pathway, yielding chrysogine and additional chrysogine-related coumpounds. Chrysogine is likely formed by a spontaneous ring closure from N-pyruvoylanthranilamide. The polypeptide is FAD-linked oxidoreductase chyH (Penicillium rubens (strain ATCC 28089 / DSM 1075 / NRRL 1951 / Wisconsin 54-1255) (Penicillium chrysogenum)).